Here is a 430-residue protein sequence, read N- to C-terminus: Adenylosuccinate synthetase (430 aa).

GTP contacts are provided by residues 12 to 18 (GDEGKGK) and 40 to 42 (GHT). Catalysis depends on Asp-13, which acts as the Proton acceptor. Residues Asp-13 and Gly-40 each contribute to the Mg(2+) site. IMP contacts are provided by residues 13–16 (DEGK), 38–41 (NAGH), Thr-129, Arg-143, Gln-224, Thr-239, and Arg-303. Catalysis depends on His-41, which acts as the Proton donor. Position 299–305 (299–305 (ATTGRRR)) interacts with substrate. GTP contacts are provided by residues Arg-305, 331–333 (KLD), and 413–415 (SVG).

This sequence belongs to the adenylosuccinate synthetase family. In terms of assembly, homodimer. Requires Mg(2+) as cofactor.

It localises to the cytoplasm. The enzyme catalyses IMP + L-aspartate + GTP = N(6)-(1,2-dicarboxyethyl)-AMP + GDP + phosphate + 2 H(+). The protein operates within purine metabolism; AMP biosynthesis via de novo pathway; AMP from IMP: step 1/2. Functionally, plays an important role in the de novo pathway of purine nucleotide biosynthesis. Catalyzes the first committed step in the biosynthesis of AMP from IMP. In Desulfatibacillum aliphaticivorans, this protein is Adenylosuccinate synthetase.